The following is a 286-amino-acid chain: MIRPRKVFAQHWLKSEKALDAIIKAAECTESDRSPKGDCILEIGPGTGILTRRLLPLVQSLIAVEIDRDLCQLLSKQLGKTENFLLLQGDFLTLDLPSYLVAFPNFQKPNKVVANIPYNITGPIIEKLLGTIANPNPEPFDSIVLLVQKEVAERLYAKPGSKTFGALSVRVQYLAECELICTVPASAFHPAPKVDSAVVRLRPRKIEIPALNPRQLETFLKLGFGAKRKMLRNNLQSVIERDRLSHLLEQLKINPQARAEDISVQQWVILANELAVASGEQGVGNR.

The S-adenosyl-L-methionine site is built by histidine 11, leucine 13, glycine 44, glutamate 65, aspartate 90, and asparagine 115.

Belongs to the class I-like SAM-binding methyltransferase superfamily. rRNA adenine N(6)-methyltransferase family. RsmA subfamily.

Its subcellular location is the cytoplasm. It carries out the reaction adenosine(1518)/adenosine(1519) in 16S rRNA + 4 S-adenosyl-L-methionine = N(6)-dimethyladenosine(1518)/N(6)-dimethyladenosine(1519) in 16S rRNA + 4 S-adenosyl-L-homocysteine + 4 H(+). Specifically dimethylates two adjacent adenosines (A1518 and A1519) in the loop of a conserved hairpin near the 3'-end of 16S rRNA in the 30S particle. May play a critical role in biogenesis of 30S subunits. This is Ribosomal RNA small subunit methyltransferase A from Nostoc punctiforme (strain ATCC 29133 / PCC 73102).